The primary structure comprises 128 residues: Fluoride-specific ion channel FluC (128 aa).

The next 4 helical transmembrane spans lie at 5–25, 35–55, 67–87, and 96–116; these read IVAI…LSLA, LGTL…AVVF, LFVI…SVEV, and FGWA…LTAL. Na(+) contacts are provided by G75 and T78.

It belongs to the fluoride channel Fluc/FEX (TC 1.A.43) family.

It localises to the cell inner membrane. The enzyme catalyses fluoride(in) = fluoride(out). Na(+) is not transported, but it plays an essential structural role and its presence is essential for fluoride channel function. Fluoride-specific ion channel. Important for reducing fluoride concentration in the cell, thus reducing its toxicity. The polypeptide is Fluoride-specific ion channel FluC (Burkholderia orbicola (strain MC0-3)).